Consider the following 262-residue polypeptide: Hydroxyethylthiazole kinase (262 aa).

Residue methionine 50 participates in substrate binding. ATP-binding residues include arginine 125 and threonine 171. Glycine 198 serves as a coordination point for substrate.

Belongs to the Thz kinase family. Mg(2+) serves as cofactor.

The catalysed reaction is 5-(2-hydroxyethyl)-4-methylthiazole + ATP = 4-methyl-5-(2-phosphooxyethyl)-thiazole + ADP + H(+). It participates in cofactor biosynthesis; thiamine diphosphate biosynthesis; 4-methyl-5-(2-phosphoethyl)-thiazole from 5-(2-hydroxyethyl)-4-methylthiazole: step 1/1. Functionally, catalyzes the phosphorylation of the hydroxyl group of 4-methyl-5-beta-hydroxyethylthiazole (THZ). The sequence is that of Hydroxyethylthiazole kinase from Shigella flexneri serotype 5b (strain 8401).